A 244-amino-acid chain; its full sequence is E3 ubiquitin-protein ligase RNF166 (244 aa).

Residues 10-30 (AQRPQAPGPGPPRPPPPAGPA) form a disordered region. A compositionally biased stretch (pro residues) spans 15–28 (APGPGPPRPPPPAG). The RING-type zinc-finger motif lies at 40–80 (CPICLEVFHRAVGIAGCGHTFCGECLQPCLQVPSPLCPLCR). Zn(2+) is bound by residues Cys105, Cys108, His120, and Cys124. Residues 105–124 (CRGCSKKVTLAKMRSHVSSC) form a C2HC RNF-type zinc finger. The UIM domain maps to 228–244 (DEEAALQAALALSLSEN).

It localises to the cytoplasm. The enzyme catalyses S-ubiquitinyl-[E2 ubiquitin-conjugating enzyme]-L-cysteine + [acceptor protein]-L-lysine = [E2 ubiquitin-conjugating enzyme]-L-cysteine + N(6)-ubiquitinyl-[acceptor protein]-L-lysine.. It functions in the pathway protein modification; protein ubiquitination. In terms of biological role, E3 ubiquitin-protein ligase that promotes the ubiquitination of different substrates. This Gallus gallus (Chicken) protein is E3 ubiquitin-protein ligase RNF166 (RNF166).